The following is a 574-amino-acid chain: MNDNLFVSLDRLLLEFVFQYEQDISIKEDTIQRINKCLESIKENKANVSKLREAINKVDEDIAFHYKHSKEIKDSCSNWKPTCDVFHKHEDYIKDQLTAYQETNEKDKKMYHDYICQYEDVLKQYQLKYSETRFSCKYYEKKKEHEEIKNRVLACTEQLQLNETILMKFLVPAPFPSLTKWTLYVVNLRYRTQDILKRANNFTKRSFELEKEADDMEIEINSLNKMARLFESKTFSEALDEKNKNTEKRKEFEERIFEKDEQVSNRSSQNSQLLLPCESQKFVRNMNSSEARVTDKKEESSANQSKFVRSDVRQKENNPQIFNDSGMDSNSKSSHIPAVKSSQGFMQFRLNQPNYNQRIEKEHIDAECGDKETVRQVRESKCSTQALYIEHFGKSIENNSVEEERDENFPQTPETPSFLRTPEALKTPESMEKMQFPKSPFFEITKNATSEGHKQKDSPGFSFLMSYTSRSPGLNLFDSSVSDSEISSDQFNEHYSAVNLNPSSSQQGIGNLFGKSEGEDAFTFSFSSDSSHTFGAGKDDFSFPFSFEQDPSTMTSSSSKDFSSSQNKTQFMFF.

The disordered stretch occupies residues 259–313; sequence KDEQVSNRSSQNSQLLLPCESQKFVRNMNSSEARVTDKKEESSANQSKFVRSDVR. The span at 264-275 shows a compositional bias: low complexity; it reads SNRSSQNSQLLL. Thr-427 carries the post-translational modification Phosphothreonine. Phosphoserine is present on Ser-430. Positions 549-574 are disordered; the sequence is QDPSTMTSSSSKDFSSSQNKTQFMFF. Over residues 552–565 the composition is skewed to low complexity; sequence STMTSSSSKDFSSS.

In terms of assembly, interacts with SYCE1. Interacts with proteasome subunit PSMA8; to participate in meiosis progression during spermatogenesis. Most abundantly expressed in testis. Also expressed in retina and skeletal muscle.

The protein localises to the chromosome. Meiotic protein that localizes to the central element of the synaptonemal complex and is required for chromosome synapsis during meiotic recombination. Required for the appropriate processing of intermediate recombination nodules before crossover formation. The polypeptide is Protein SIX6OS1 (Six6os1) (Mus musculus (Mouse)).